The following is a 34-amino-acid chain: uncharacterized protein (34 aa).

This is an uncharacterized protein from Rhizobium radiobacter (Agrobacterium tumefaciens).